The primary structure comprises 585 residues: MTDLIQAPESEQTWPASALGPQQRAAAWERFGTEQFDVVVIGGGVVGSGCALDAATRGLKVALVEARDLASGTSSRSSKMFHGGLRYLEQLEFGLVREALYERELSLTTLAPHLVKPLPFLFPLTKRWWERPYIAAGIFLYDRLGGAKSVPAQKHLTRAGALRLSPGLKRSSLIGGIRYYDTVVDDARHTLTVARTAAHYGAVVRCSTQVVALLREGDRVIGVRVRDSEDGAVTEIRGHVVVNATGVWTDEIQALSKQRGRFQVRVSKGVHVVVPRDRIVSDVAMILRTKKSVMFIIPWGNHWIIGTTDTDWNLDLAHPAATKADIDYILQTVNTVLATPLTHADIDGVYAGLRPLLAGESDDTSKLTREHAVAVPVAGLVAIAGGKYTTYRVMAADAIDAAVAFVPARVAPSITEKVGLLGADGYFALINQVEHVAALQGLHPYRVRHLLDRYGALIGDVLALAAEAPDLLSPIQEAPGYLKVEARYAVTAEGALHLEDILARRMRVSIEYPHRGVACAREVADVVAPVLGWTAEDIDREVATYNARVEAEVLSQAQPDDVSADMLRASAPEARTKIIEPVSLT.

An FAD-binding site is contributed by 37–65 (DVVVIGGGVVGSGCALDAATRGLKVALVE).

This sequence belongs to the FAD-dependent glycerol-3-phosphate dehydrogenase family. FAD is required as a cofactor.

The protein localises to the cytoplasm. The enzyme catalyses a quinone + sn-glycerol 3-phosphate = dihydroxyacetone phosphate + a quinol. This is Glycerol-3-phosphate dehydrogenase (glpD) from Mycobacterium leprae (strain TN).